Consider the following 214-residue polypeptide: Probable transaldolase (214 aa).

Catalysis depends on Lys83, which acts as the Schiff-base intermediate with substrate.

The protein belongs to the transaldolase family. Type 3B subfamily.

It is found in the cytoplasm. The catalysed reaction is D-sedoheptulose 7-phosphate + D-glyceraldehyde 3-phosphate = D-erythrose 4-phosphate + beta-D-fructose 6-phosphate. The protein operates within carbohydrate degradation; pentose phosphate pathway; D-glyceraldehyde 3-phosphate and beta-D-fructose 6-phosphate from D-ribose 5-phosphate and D-xylulose 5-phosphate (non-oxidative stage): step 2/3. In terms of biological role, transaldolase is important for the balance of metabolites in the pentose-phosphate pathway. This Streptococcus pyogenes serotype M2 (strain MGAS10270) protein is Probable transaldolase.